The following is a 41-amino-acid chain: Chymotrypsin inhibitor (41 aa).

In terms of biological role, inhibits chymotrypsin. In Eisenia hortensis (European nightcrawler), this protein is Chymotrypsin inhibitor.